A 330-amino-acid polypeptide reads, in one-letter code: uncharacterized protein (330 aa).

An ABC transporter domain is found at 4–242 (LTISDLVVEY…AGEVLFEQST (239 aa)). 40 to 47 (GPSGCGKT) is an ATP binding site. 210 to 330 (DRVLELMPAQ…LIEHRELASE (121 aa)) lines the a nucleoside 3',5'-cyclic phosphate pocket.

Belongs to the ABC transporter superfamily.

This is an uncharacterized protein from Mycobacterium bovis (strain ATCC BAA-935 / AF2122/97).